We begin with the raw amino-acid sequence, 249 residues long: tRNA (guanine-N(1)-)-methyltransferase (249 aa).

Residues Gly-113 and 133-138 (IGDYVL) contribute to the S-adenosyl-L-methionine site.

It belongs to the RNA methyltransferase TrmD family. As to quaternary structure, homodimer.

It is found in the cytoplasm. The catalysed reaction is guanosine(37) in tRNA + S-adenosyl-L-methionine = N(1)-methylguanosine(37) in tRNA + S-adenosyl-L-homocysteine + H(+). Its function is as follows. Specifically methylates guanosine-37 in various tRNAs. This chain is tRNA (guanine-N(1)-)-methyltransferase, found in Aeromonas hydrophila subsp. hydrophila (strain ATCC 7966 / DSM 30187 / BCRC 13018 / CCUG 14551 / JCM 1027 / KCTC 2358 / NCIMB 9240 / NCTC 8049).